The following is a 192-amino-acid chain: 7-methyl-GTP pyrophosphatase (192 aa).

Catalysis depends on aspartate 69, which acts as the Proton acceptor.

This sequence belongs to the Maf family. YceF subfamily. Requires a divalent metal cation as cofactor.

The protein localises to the cytoplasm. The enzyme catalyses N(7)-methyl-GTP + H2O = N(7)-methyl-GMP + diphosphate + H(+). Nucleoside triphosphate pyrophosphatase that hydrolyzes 7-methyl-GTP (m(7)GTP). May have a dual role in cell division arrest and in preventing the incorporation of modified nucleotides into cellular nucleic acids. This is 7-methyl-GTP pyrophosphatase from Pseudomonas savastanoi pv. phaseolicola (strain 1448A / Race 6) (Pseudomonas syringae pv. phaseolicola (strain 1448A / Race 6)).